Reading from the N-terminus, the 313-residue chain is 2,3-dihydroxyphenylpropionate/2,3-dihydroxicinnamic acid 1,2-dioxygenase (313 aa).

Histidine 116 acts as the Proton donor in catalysis. Catalysis depends on histidine 180, which acts as the Proton acceptor.

This sequence belongs to the LigB/MhpB extradiol dioxygenase family. In terms of assembly, homotetramer. Fe(2+) is required as a cofactor.

The catalysed reaction is 3-(2,3-dihydroxyphenyl)propanoate + O2 = (2Z,4E)-2-hydroxy-6-oxonona-2,4-dienedioate + H(+). The enzyme catalyses (2E)-3-(2,3-dihydroxyphenyl)prop-2-enoate + O2 = (2Z,4E,7E)-2-hydroxy-6-oxonona-2,4,7-trienedioate + H(+). Its pathway is aromatic compound metabolism; 3-phenylpropanoate degradation. Catalyzes the non-heme iron(II)-dependent oxidative cleavage of 2,3-dihydroxyphenylpropionic acid and 2,3-dihydroxicinnamic acid into 2-hydroxy-6-ketononadienedioate and 2-hydroxy-6-ketononatrienedioate, respectively. In Mycobacterium sp. (strain MCS), this protein is 2,3-dihydroxyphenylpropionate/2,3-dihydroxicinnamic acid 1,2-dioxygenase.